The following is a 318-amino-acid chain: N-acyl-aromatic-L-amino acid amidohydrolase (carboxylate-forming) (318 aa).

Positions 1–210 (MSSLPGSREP…ILDFIELFNQ (210 aa)) are hydrolytic domain. Histidine 21 and glutamate 24 together coordinate Zn(2+). Residues arginine 63 and 70–71 (NR) contribute to the substrate site. Histidine 116 provides a ligand contact to Zn(2+). Residues glutamate 177 and tyrosine 287 each contribute to the substrate site. Positions 211–318 (GMDLPAFEMD…RLTPRSTQTP (108 aa)) are shielding domain. Threonine 317 carries the phosphothreonine modification.

This sequence belongs to the AspA/AstE family. Aspartoacylase subfamily. As to quaternary structure, exists as a mixture of homodimers and homotetramer, both catalytically active. It depends on Zn(2+) as a cofactor. As to expression, expressed predominantly in kidney and to a lesser extent in liver. Weakly expressed in heart, small intestine, brain, lung, testis, and stomach.

Its subcellular location is the apical cell membrane. The protein resides in the cytoplasm. The enzyme catalyses an N-acyl-aromatic L-alpha-amino acid + H2O = an aromatic L-alpha-amino acid + a carboxylate. It catalyses the reaction an N-acetyl-L-cysteine-S-conjugate + H2O = an S-substituted L-cysteine + acetate. Functionally, plays an important role in deacetylating mercapturic acids in kidney proximal tubules. Also acts on N-acetyl-aromatic amino acids. This chain is N-acyl-aromatic-L-amino acid amidohydrolase (carboxylate-forming) (Acy3), found in Mus musculus (Mouse).